Reading from the N-terminus, the 71-residue chain is Ceratotoxin-A (71 aa).

Positions 1–23 are cleaved as a signal peptide; that stretch reads MANLKAVFLICIVAFIAFQCVVA. 2 propeptides span residues 24-35 and 65-71; these read EPAAEDSIVVKR and VAAGLVG.

As to quaternary structure, homomer of four to six subunits.

It is found in the secreted. Its function is as follows. Female-specific peptides with potent activity against Gram-positive and Gram-negative bacteria. They have as well hemolytic activity. The protein is Ceratotoxin-A (CTXA2) of Ceratitis capitata (Mediterranean fruit fly).